A 247-amino-acid chain; its full sequence is MQQAANREAFEARLRAVGEARYHDKHPFHQQLHGGQCSMIQVRAWVINRYYYQSRIPMKDAAFLSRCEDPQLRRAWRNRIEDHDGGVDEGGGIRRWLKLAEAVGLDPDYVASTRGVLAGTRFAVEAYVHFVREKPMLEAVASSLTEMFAPAIHANRIAGLIEHYAFANDSALAYFRQRLNEAPKEVAFGLNYVLDHADTLEKQDASVAALTFKTDVLWSQLDALSHAYVSPGLIPPGGWDGREGVIS.

Belongs to the PqqC family.

It catalyses the reaction 6-(2-amino-2-carboxyethyl)-7,8-dioxo-1,2,3,4,7,8-hexahydroquinoline-2,4-dicarboxylate + 3 O2 = pyrroloquinoline quinone + 2 H2O2 + 2 H2O + H(+). The protein operates within cofactor biosynthesis; pyrroloquinoline quinone biosynthesis. Functionally, ring cyclization and eight-electron oxidation of 3a-(2-amino-2-carboxyethyl)-4,5-dioxo-4,5,6,7,8,9-hexahydroquinoline-7,9-dicarboxylic-acid to PQQ. This Rhizobium rhizogenes (strain K84 / ATCC BAA-868) (Agrobacterium radiobacter) protein is Pyrroloquinoline-quinone synthase.